The primary structure comprises 142 residues: Gonadotropin subunit beta-2 (142 aa).

Residues M1 to G23 form the signal peptide. 6 cysteine pairs are disulfide-bonded: C29/C77, C43/C92, C46/C130, C54/C108, C58/C110, and C113/C120. An N-linked (GlcNAc...) asparagine glycan is attached at N33.

This sequence belongs to the glycoprotein hormones subunit beta family. As to quaternary structure, heterodimer of an alpha and a beta chain.

Its subcellular location is the secreted. Its function is as follows. Involved in gametogenesis and steroidogenesis. The polypeptide is Gonadotropin subunit beta-2 (cgbb) (Oncorhynchus keta (Chum salmon)).